The sequence spans 120 residues: Large ribosomal subunit protein eL8 (120 aa).

Belongs to the eukaryotic ribosomal protein eL8 family. Part of the 50S ribosomal subunit. Probably part of the RNase P complex.

It localises to the cytoplasm. Its function is as follows. Multifunctional RNA-binding protein that recognizes the K-turn motif in ribosomal RNA, the RNA component of RNase P, box H/ACA, box C/D and box C'/D' sRNAs. This chain is Large ribosomal subunit protein eL8, found in Halorubrum lacusprofundi (strain ATCC 49239 / DSM 5036 / JCM 8891 / ACAM 34).